The chain runs to 183 residues: MDPSQNPNIVHATTIISVRRGGHVAVAGDGQVTLGHTVMKGNARKVRRLGREGQVLAGFAGAAADAFTLFELFEAKLDKHGQLTRAAVELAKDWRTERRLGKLEALLAVADKETSLIISGTGDVIEPEDGIIAIGSGGAYALSAARALLAHTELDAKTIATEAINIAGDICIYTNRNVVVEEL.

Thr-13 is a catalytic residue. Residues Gly-168, Cys-171, and Thr-174 each coordinate Na(+).

It belongs to the peptidase T1B family. HslV subfamily. In terms of assembly, a double ring-shaped homohexamer of HslV is capped on each side by a ring-shaped HslU homohexamer. The assembly of the HslU/HslV complex is dependent on binding of ATP.

It is found in the cytoplasm. It carries out the reaction ATP-dependent cleavage of peptide bonds with broad specificity.. Its activity is regulated as follows. Allosterically activated by HslU binding. Functionally, protease subunit of a proteasome-like degradation complex believed to be a general protein degrading machinery. In Xanthomonas oryzae pv. oryzae (strain MAFF 311018), this protein is ATP-dependent protease subunit HslV.